A 96-amino-acid chain; its full sequence is Co-chaperonin GroES (96 aa).

This sequence belongs to the GroES chaperonin family. As to quaternary structure, heptamer of 7 subunits arranged in a ring. Interacts with the chaperonin GroEL.

It localises to the cytoplasm. Its function is as follows. Together with the chaperonin GroEL, plays an essential role in assisting protein folding. The GroEL-GroES system forms a nano-cage that allows encapsulation of the non-native substrate proteins and provides a physical environment optimized to promote and accelerate protein folding. GroES binds to the apical surface of the GroEL ring, thereby capping the opening of the GroEL channel. The chain is Co-chaperonin GroES from Streptococcus pyogenes serotype M18 (strain MGAS8232).